The following is a 212-amino-acid chain: MTICGVDEAGKGPVLGPMITAGVLVSDMSELEMLGIKDSKKLSPKKRESLFEEITFSWKTYTVVRTPFDIDSREGTMNAFTASCHADVVRALCADFVYLDACDVNAKRFGENVLRLSGSSAHVCSEHKADAKYAVVGAASIVAKVTRDRCIADLKEEYGEIGSGYPSDPATISFLTEYIRTRGEVPLCARRSWQTVQDILDRASQTGLSDFF.

The 205-residue stretch at 1–205 (MTICGVDEAG…VQDILDRASQ (205 aa)) folds into the RNase H type-2 domain. Residues Asp-7, Glu-8, and Asp-100 each contribute to the a divalent metal cation site.

This sequence belongs to the RNase HII family. Requires Mn(2+) as cofactor. Mg(2+) is required as a cofactor.

The protein resides in the cytoplasm. The enzyme catalyses Endonucleolytic cleavage to 5'-phosphomonoester.. In terms of biological role, endonuclease that specifically degrades the RNA of RNA-DNA hybrids. This chain is Ribonuclease HII, found in Methanocorpusculum labreanum (strain ATCC 43576 / DSM 4855 / Z).